A 173-amino-acid polypeptide reads, in one-letter code: Alpha-crystallin A chain (173 aa).

Met1 is modified (N-acetylmethionine). A required for complex formation with BFSP1 and BFSP2 region spans residues 1-63 (MDITIQHPWF…RTVLESGISE (63 aa)). The residue at position 6 (Gln6) is a Deamidated glutamine; partial. Ser45 is subject to Phosphoserine. Gln50 is modified (deamidated glutamine; partial). The region spanning 52–164 (LFRTVLESGI…SDRSIPVSRE (113 aa)) is the sHSP domain. N6-acetyllysine occurs at positions 70 and 99. Zn(2+) is bound by residues His100, Glu102, and His107. Position 122 is a phosphoserine (Ser122). Asn123 is subject to Deamidated asparagine; partial. Over residues 146–167 (IHSDMDASHSDRSIPVSREEKP) the composition is skewed to basic and acidic residues. The disordered stretch occupies residues 146–173 (IHSDMDASHSDRSIPVSREEKPTLAPSS). Residue His154 coordinates Zn(2+). The O-linked (GlcNAc) serine glycan is linked to Ser162.

Belongs to the small heat shock protein (HSP20) family. In terms of assembly, heteromer composed of three CRYAA and one CRYAB subunits. Inter-subunit bridging via zinc ions enhances stability, which is crucial as there is no protein turn over in the lens. Can also form homodimers and homotetramers (dimers of dimers) which serve as the building blocks of homooligomers. Within homooligomers, the zinc-binding motif is created from residues of 3 different molecules. His-100 and Glu-102 from one molecule are ligands of the zinc ion, and His-107 and His-154 residues from additional molecules complete the site with tetrahedral coordination geometry. Part of a complex required for lens intermediate filament formation composed of BFSP1, BFSP2 and CRYAA. Post-translationally, acetylation at Lys-70 may increase chaperone activity. Undergoes age-dependent proteolytical cleavage at the C-terminus.

It localises to the cytoplasm. It is found in the nucleus. In terms of biological role, contributes to the transparency and refractive index of the lens. Acts as a chaperone, preventing aggregation of various proteins under a wide range of stress conditions. Required for the correct formation of lens intermediate filaments as part of a complex composed of BFSP1, BFSP2 and CRYAA. The protein is Alpha-crystallin A chain (CRYAA) of Osphranter rufus (Red kangaroo).